A 257-amino-acid polypeptide reads, in one-letter code: Snake venom serine protease KN9 (257 aa).

A signal peptide spans 1 to 18 (MVLIRVLANLLILQLSYA). Residues 19–24 (QKSSEL) constitute a propeptide that is removed on maturation. Residues 25–248 (VVGGDECNIN…HLDWIKSIIA (224 aa)) form the Peptidase S1 domain. Intrachain disulfides connect cysteine 31–cysteine 162, cysteine 49–cysteine 65, cysteine 141–cysteine 209, cysteine 173–cysteine 188, and cysteine 199–cysteine 224. Histidine 64 acts as the Charge relay system in catalysis. The N-linked (GlcNAc...) asparagine glycan is linked to asparagine 102. Aspartate 109 (charge relay system) is an active-site residue. N-linked (GlcNAc...) asparagine glycosylation is found at asparagine 120 and asparagine 121. The active-site Charge relay system is serine 203.

The protein belongs to the peptidase S1 family. Snake venom subfamily. As to quaternary structure, monomer. As to expression, expressed by the venom gland.

The protein localises to the secreted. Its function is as follows. Snake venom serine protease that may act in the hemostasis system of the prey. The protein is Snake venom serine protease KN9 of Trimeresurus stejnegeri (Chinese green tree viper).